The following is a 64-amino-acid chain: Translation machinery-associated protein 7 homolog (64 aa).

Residues 1 to 64 are disordered; it reads MSGREGGKKK…QGGIKKSGKK (64 aa). Residues 21 to 50 adopt a coiled-coil conformation; it reads EMDEDTAAFKAKQKEQQKALEAAKQKATKG. A compositionally biased stretch (basic and acidic residues) spans 32 to 44; the sequence is KQKEQQKALEAAK.

This sequence belongs to the TMA7 family.

The polypeptide is Translation machinery-associated protein 7 homolog (Anopheles gambiae (African malaria mosquito)).